Here is a 4328-residue protein sequence, read N- to C-terminus: Cadherin-4 (4328 aa).

An N-terminal signal peptide occupies residues 1 to 23 (MKKHRVFHLFLLIFCKAISLVTT). The Extracellular segment spans residues 24–4072 (SSSTEQIFEF…TVLEFLLKAE (4049 aa)). Asn-39 and Asn-56 each carry an N-linked (GlcNAc...) asparagine glycan. Cadherin domains lie at 108-153 (PLNR…SPVF) and 156-275 (GEQG…NPNI). N-linked (GlcNAc...) asparagine glycosylation is found at Asn-196, Asn-330, Asn-339, Asn-365, Asn-431, Asn-452, and Asn-584. 11 consecutive Cadherin domains span residues 384-492 (DNEK…APVF), 507-608 (PGDV…SPVF), 609-720 (SSFP…SPQF), 721-826 (DEVS…PPKC), 827-934 (VVQH…AIEF), 935-1051 (DDVA…KPMY), 1047-1156 (KKPM…SPTF), 1175-1262 (RIFA…PPEI), 1265-1363 (KKSD…RPKF), 1364-1467 (SASH…SPYF), and 1476-1570 (VDES…APET). 2 N-linked (GlcNAc...) asparagine glycosylation sites follow: Asn-811 and Asn-899. The Cell attachment site signature appears at 1090–1092 (RGD). A glycan (N-linked (GlcNAc...) asparagine) is linked at Asn-1192. A disordered region spans residues 1246–1267 (NSAGQKPRKSKNSPPEISGKKS). A glycan (N-linked (GlcNAc...) asparagine) is linked at Asn-1335. Residue Asn-1610 is glycosylated (N-linked (GlcNAc...) asparagine). The Cadherin 14 domain maps to 1671–1784 (RRQVYRGTIR…IDENDEPPRF (114 aa)). Asn-1895 carries N-linked (GlcNAc...) asparagine glycosylation. One can recognise a Cadherin 15 domain in the interval 1917–1984 (FSIVNPHEAF…ENINDETPIF (68 aa)). Residues Asn-2059, Asn-2150, Asn-2216, Asn-2367, Asn-2413, Asn-2440, and Asn-2535 are each glycosylated (N-linked (GlcNAc...) asparagine). Cadherin domains follow at residues 2187–2285 (EKLK…MPEF) and 2286–2397 (IRSD…PPRF). 9 Cadherin domains span residues 2429–2505 (LQFS…PPFF), 2506–2608 (VLPF…VPRF), 2609–2712 (SNSH…APAF), 2719–2813 (FTIS…PPQF), 2828–2915 (SPIL…CPEA), 2913–3011 (PEAN…RPKI), 3012–3113 (IEKL…APTF), 3114–3216 (EKST…APKF), and 3217–3326 (EKEK…APTF). N-linked (GlcNAc...) asparagine glycosylation is found at Asn-2844, Asn-2916, Asn-2941, Asn-3083, and Asn-3143. The N-linked (GlcNAc...) asparagine glycan is linked to Asn-3330. Cadherin domains lie at 3335–3428 (VQEG…APTM) and 3429–3554 (KPMK…VDEF). Asn-3512 is a glycosylation site (N-linked (GlcNAc...) asparagine). The region spanning 3706 to 3744 (ETNQCAKSPCEQWQLCIPSVHNSTYECVCPLGMEGDKCS) is the EGF-like 1 domain. Cystine bridges form between Cys-3710–Cys-3721, Cys-3715–Cys-3732, Cys-3734–Cys-3743, Cys-3898–Cys-3925, Cys-3933–Cys-3944, Cys-3938–Cys-3954, Cys-3956–Cys-3965, Cys-3972–Cys-3983, Cys-3977–Cys-3992, and Cys-3994–Cys-4003. A glycan (N-linked (GlcNAc...) asparagine) is linked at Asn-3727. The 169-residue stretch at 3757 to 3925 (EAELSVGGDG…MKLFGAQPGC (169 aa)) folds into the Laminin G-like domain. 2 consecutive EGF-like domains span residues 3929 to 3966 (TSSP…NVCE) and 3968 to 4004 (DLEP…KHCE). A glycan (N-linked (GlcNAc...) asparagine) is linked at Asn-4043. A helical membrane pass occupies residues 4073–4093 (IVIVILGVLLLLLVFCLTFIT). Topologically, residues 4094–4328 (WKCCKKNRDP…IDEEVNIHIS (235 aa)) are cytoplasmic. Disordered regions lie at residues 4143–4215 (TSSV…SSLR) and 4268–4311 (NFER…PISL). Positions 4178-4196 (TRRDPLPSDKFRRVDETAN) are enriched in basic and acidic residues. The short motif at 4207–4209 (RGD) is the Cell attachment site element.

In terms of tissue distribution, in larvae and adult, it is expressed in various tissues including pharyngeal muscle, hypodermis and gonad. In the nervous system it is expressed in sensory neurons and motor neurons in the ventral cord.

It is found in the cell membrane. Potential calcium-dependent cell-adhesion protein that controls axon guidance in the ventral cord. This is Cadherin-4 from Caenorhabditis elegans.